We begin with the raw amino-acid sequence, 455 residues long: UDP-N-acetylmuramoylalanine--D-glutamate ligase (455 aa).

119–125 (GTNGKTT) contributes to the ATP binding site.

This sequence belongs to the MurCDEF family.

It is found in the cytoplasm. The enzyme catalyses UDP-N-acetyl-alpha-D-muramoyl-L-alanine + D-glutamate + ATP = UDP-N-acetyl-alpha-D-muramoyl-L-alanyl-D-glutamate + ADP + phosphate + H(+). Its pathway is cell wall biogenesis; peptidoglycan biosynthesis. Cell wall formation. Catalyzes the addition of glutamate to the nucleotide precursor UDP-N-acetylmuramoyl-L-alanine (UMA). The polypeptide is UDP-N-acetylmuramoylalanine--D-glutamate ligase (Listeria monocytogenes serovar 1/2a (strain ATCC BAA-679 / EGD-e)).